Here is a 157-residue protein sequence, read N- to C-terminus: Transcription elongation factor GreA (157 aa).

This sequence belongs to the GreA/GreB family.

In terms of biological role, necessary for efficient RNA polymerase transcription elongation past template-encoded arresting sites. The arresting sites in DNA have the property of trapping a certain fraction of elongating RNA polymerases that pass through, resulting in locked ternary complexes. Cleavage of the nascent transcript by cleavage factors such as GreA or GreB allows the resumption of elongation from the new 3'terminus. GreA releases sequences of 2 to 3 nucleotides. This chain is Transcription elongation factor GreA, found in Bartonella tribocorum (strain CIP 105476 / IBS 506).